The primary structure comprises 458 residues: Exodeoxyribonuclease 7 large subunit (458 aa).

This sequence belongs to the XseA family. Heterooligomer composed of large and small subunits.

The protein resides in the cytoplasm. It catalyses the reaction Exonucleolytic cleavage in either 5'- to 3'- or 3'- to 5'-direction to yield nucleoside 5'-phosphates.. Its function is as follows. Bidirectionally degrades single-stranded DNA into large acid-insoluble oligonucleotides, which are then degraded further into small acid-soluble oligonucleotides. The chain is Exodeoxyribonuclease 7 large subunit from Escherichia coli (strain UTI89 / UPEC).